A 508-amino-acid polypeptide reads, in one-letter code: Monocarboxylate transporter 9 (508 aa).

6 consecutive transmembrane segments (helical) span residues 13-33, 53-73, 80-100, 102-122, 137-157, and 164-184; these read WVIV…PLAV, WVGS…SLFV, PVTI…SLAP, IYFL…LLYT, GLAL…YAAL, and FYGL…ILAC. The disordered stretch occupies residues 242–263; sequence GDWGRETSLPKNPTGAAHTKEP. Transmembrane regions (helical) follow at residues 303-323, 341-361, 370-390, 396-416, 431-451, and 460-480; these read VFSA…PPSL, IPLI…LGIL, LYLY…IPLA, LAIL…FPYV, GILM…VGWF, and IAFY…LLAI.

This sequence belongs to the major facilitator superfamily. Monocarboxylate porter (TC 2.A.1.13) family. As to expression, expressed in the liver and kidneys. In the liver localizes on the sinusoidal membrane of the hepatocytes.

The protein resides in the cell membrane. It catalyses the reaction creatine(in) = creatine(out). It carries out the reaction (R)-carnitine(in) = (R)-carnitine(out). Its function is as follows. Extracellular pH-and Na(+)-sensitive low-affinity creatine transporter. Also functions as a pH-independent carnitine efflux transporter. This Rattus norvegicus (Rat) protein is Monocarboxylate transporter 9 (Slc16a9).